The chain runs to 448 residues: Tubulin beta-1 chain (448 aa).

GTP contacts are provided by Q11, E72, S141, G145, T146, G147, N207, and N229. E72 contributes to the Mg(2+) binding site. Residues 424–448 (QQYQDAGMDDDEAEEAYEEEEPVEE) are disordered. Residues 430–448 (GMDDDEAEEAYEEEEPVEE) show a composition bias toward acidic residues.

Belongs to the tubulin family. As to quaternary structure, dimer of alpha and beta chains. A typical microtubule is a hollow water-filled tube with an outer diameter of 25 nm and an inner diameter of 15 nM. Alpha-beta heterodimers associate head-to-tail to form protofilaments running lengthwise along the microtubule wall with the beta-tubulin subunit facing the microtubule plus end conferring a structural polarity. Microtubules usually have 13 protofilaments but different protofilament numbers can be found in some organisms and specialized cells. It depends on Mg(2+) as a cofactor.

It is found in the cytoplasm. The protein localises to the cytoskeleton. In terms of biological role, tubulin is the major constituent of microtubules, a cylinder consisting of laterally associated linear protofilaments composed of alpha- and beta-tubulin heterodimers. Microtubules grow by the addition of GTP-tubulin dimers to the microtubule end, where a stabilizing cap forms. Below the cap, tubulin dimers are in GDP-bound state, owing to GTPase activity of alpha-tubulin. The chain is Tubulin beta-1 chain (TUB1) from Colletotrichum gloeosporioides (Anthracnose fungus).